The sequence spans 359 residues: Serpentine receptor class epsilon-26 (359 aa).

Transmembrane regions (helical) follow at residues 29 to 49, 66 to 86, 127 to 147, 172 to 192, 195 to 215, 256 to 276, and 282 to 302; these read CAIS…VFVS, IGVP…ITIL, VAGF…LAIV, FIII…FNIL, YVLN…YYYI, LVFV…ALVL, and FFMH…FLVV.

It belongs to the nematode receptor-like protein sre family.

It is found in the membrane. The sequence is that of Serpentine receptor class epsilon-26 (sre-26) from Caenorhabditis elegans.